The chain runs to 668 residues: Cyclin-dependent kinase 11.2 (668 aa).

The segment at 1-265 is disordered; it reads MSNYSTNGSR…EQWESMTENE (265 aa). 3 stretches are compositionally biased toward basic and acidic residues: residues 35–73, 85–127, and 140–163; these read KTKE…DHRD, YCRD…DSLR, and LPDD…KTVM. Residues 164–181 show a composition bias toward acidic residues; the sequence is EVEDVEMSPVEMLDEEEV. 2 stretches are compositionally biased toward basic and acidic residues: residues 197–212 and 245–265; these read NEPE…DPES and PDDK…TENE. A Protein kinase domain is found at 304-600; that stretch reads YVILNVIAEG…ASEALQHDWF (297 aa). Residues 310–318 and K333 each bind ATP; that span reads IAEGTYGEV. Residue D432 is the Proton acceptor of the active site.

This sequence belongs to the protein kinase superfamily. CMGC Ser/Thr protein kinase family. CDC2/CDKX subfamily. In terms of tissue distribution, expressed in somatic cells and at varying levels throughout the germline (at protein level). Highly expressed in the germ line of hermaphrodites (at protein level).

It localises to the nucleus. The protein resides in the cytoplasm. The enzyme catalyses L-seryl-[protein] + ATP = O-phospho-L-seryl-[protein] + ADP + H(+). It catalyses the reaction L-threonyl-[protein] + ATP = O-phospho-L-threonyl-[protein] + ADP + H(+). Functionally, probable cyclin-dependent kinase whose activity is most likely regulated by the cyclin cyl-1/Cylin-L. Acts partially redundantly with cdk-11.1 to ensure embryonic viability. In contrast to cdk-11.1, not essential for male and female fertility. This Caenorhabditis elegans protein is Cyclin-dependent kinase 11.2.